The primary structure comprises 407 residues: Deacetylase Atu3266 (407 aa).

Residues histidine 75, histidine 77, lysine 173, histidine 206, histidine 229, and aspartate 289 each contribute to the Zn(2+) site. Lysine 173 carries the post-translational modification N6-carboxylysine.

Belongs to the metallo-dependent hydrolases superfamily. Atu3266/EF_0837 deacetylase family. Homohexamer, dimer of trimers. It depends on Zn(2+) as a cofactor.

Functionally, esterase that catalyzes the deacetylation of acetyl-(R)-mandelate (in vitro). Can also hydrolyze acetyl glycolate, but with lower efficiency. Has very low N-acetyl-D-amino acid deacetylase activity with N-acetyl-D-serine and N-acetyl-D-threonine (in vitro). Theoretical substrate docking studies suggest that other N-acetylated amino acids may optimally occupy the active site and may in fact be the physiological substrates. This Agrobacterium fabrum (strain C58 / ATCC 33970) (Agrobacterium tumefaciens (strain C58)) protein is Deacetylase Atu3266.